The sequence spans 325 residues: Ribonucleoside-diphosphate reductase small chain (325 aa).

Residues Asp-76, Glu-107, and His-110 each coordinate Fe cation. Tyr-114 is an active-site residue. Positions 170, 204, and 207 each coordinate Fe cation.

The protein belongs to the ribonucleoside diphosphate reductase small chain family. Heterodimer of a large and a small subunit. Fe cation serves as cofactor.

It carries out the reaction a 2'-deoxyribonucleoside 5'-diphosphate + [thioredoxin]-disulfide + H2O = a ribonucleoside 5'-diphosphate + [thioredoxin]-dithiol. In terms of biological role, provides the precursors necessary for DNA synthesis. Catalyzes the biosynthesis of deoxyribonucleotides from the corresponding ribonucleotides. The protein is Ribonucleoside-diphosphate reductase small chain of Encephalitozoon cuniculi (strain GB-M1) (Microsporidian parasite).